The primary structure comprises 283 residues: Para-Rep C10 (283 aa).

The CRESS-DNA virus Rep endonuclease domain occupies 3 to 96 (SIRAIHWCFT…IDGPWEYGTW (94 aa)). Residues 10–13 (CFTL) carry the RCR-1 motif. Positions 36 and 42 each coordinate a divalent metal cation. The short motif at 42-44 (HLQ) is the RCR-2 element. The short motif at 51–71 (KQTTLKKMKELLPGAHLEMAR) is the Nuclear localization signal element. Catalysis depends on Y79, which acts as the For DNA cleavage activity. The RCR-3 signature appears at 79-82 (YCQK). An a divalent metal cation-binding site is contributed by E84. The Nuclear localization signal motif lies at 96-102 (WISTGSH). Residue 172 to 180 (GPHGGEGKS) participates in ATP binding.

It belongs to the nanoviridea/circoviridae replication-associated protein family. As to quaternary structure, homooligomer (Potential). Rep binds to repeated DNA motifs (iterons). The cofactor is Mg(2+). Requires Mn(2+) as cofactor.

It is found in the host nucleus. The catalysed reaction is ATP + H2O = ADP + phosphate + H(+). In terms of biological role, initiates and terminates the replication only of its own subviral DNA molecule. The closed circular ssDNA genome is first converted to a superhelical dsDNA. Rep binds a specific hairpin at the genome origin of replication. Introduces an endonucleolytic nick within the intergenic region of the genome, thereby initiating the rolling circle replication (RCR). Following cleavage, binds covalently to the 5'-phosphate of DNA as a tyrosyl ester. The cleavage gives rise to a free 3'-OH that serves as a primer for the cellular DNA polymerase. The polymerase synthesizes the (+) strand DNA by rolling circle mechanism. After one round of replication, a Rep-catalyzed nucleotidyl transfer reaction releases a circular single-stranded virus genome, thereby terminating the replication. Displays origin-specific DNA cleavage, nucleotidyl transferase, ATPase and helicase activities. In Milk vetch dwarf C10 alphasatellite (MVDC10A), this protein is Para-Rep C10 (C10).